Here is a 156-residue protein sequence, read N- to C-terminus: MNLNLTLLGQAISFAIFVWFCMKYVWPPVIAALEERSKKIADGLEAANRASRDLELAQEQASQILRESKENAAEIIEQANKRANQMVDEAKEQVIADGKRLREAAQAEIEQDVMRAKEALRAQVSVLAFAGAEKILGATIDEKAHSEIVEQLAKEL.

Residues 7-29 (LLGQAISFAIFVWFCMKYVWPPV) form a helical membrane-spanning segment.

It belongs to the ATPase B chain family. F-type ATPases have 2 components, F(1) - the catalytic core - and F(0) - the membrane proton channel. F(1) has five subunits: alpha(3), beta(3), gamma(1), delta(1), epsilon(1). F(0) has three main subunits: a(1), b(2) and c(10-14). The alpha and beta chains form an alternating ring which encloses part of the gamma chain. F(1) is attached to F(0) by a central stalk formed by the gamma and epsilon chains, while a peripheral stalk is formed by the delta and b chains.

The protein resides in the cell inner membrane. F(1)F(0) ATP synthase produces ATP from ADP in the presence of a proton or sodium gradient. F-type ATPases consist of two structural domains, F(1) containing the extramembraneous catalytic core and F(0) containing the membrane proton channel, linked together by a central stalk and a peripheral stalk. During catalysis, ATP synthesis in the catalytic domain of F(1) is coupled via a rotary mechanism of the central stalk subunits to proton translocation. Its function is as follows. Component of the F(0) channel, it forms part of the peripheral stalk, linking F(1) to F(0). The sequence is that of ATP synthase subunit b 2 from Marinomonas sp. (strain MWYL1).